A 353-amino-acid chain; its full sequence is Draxin-B (353 aa).

A signal peptide spans 1 to 21; sequence MASSWCLPLALLVSNLAVSHS. Disordered regions lie at residues 23 to 183, 198 to 222, and 246 to 268; these read EPSS…KEGS, TVMS…RGKV, and VDAW…SGNV. Over residues 138–167 the composition is skewed to basic residues; it reads GPHKGKAQGHGHHFDHRRHGGRRDKGRHTK. Residues 252-261 are compositionally biased toward basic residues; the sequence is SRKKDKRRSK. N-linked (GlcNAc...) asparagine glycosylation is found at Asn262 and Asn267.

The protein belongs to the draxin family.

The protein localises to the secreted. Functionally, chemorepulsive axon guidance protein required for the development of spinal cord and forebrain commissures. Acts as a chemorepulsive guidance protein for commissural axons during development. Able to inhibit or repel neurite outgrowth from dorsal spinal cord. This is Draxin-B (draxin-B) from Salmo salar (Atlantic salmon).